Here is an 889-residue protein sequence, read N- to C-terminus: Coatomer subunit gamma-2 (889 aa).

5 HEAT repeats span residues 67–102 (VEATEVFFATTKLFQSKDAGLRRMVYLMIKELSPSA), 103–140 (DEVIIVTSSLMKDMNSKTDMYRANAIRVLCRIIDSTLL), 289–326 (RELTPAITVLQLFLSSSKPVLRFAAVRTLNKVASTHPL), 328–360 (VTNCNIDMESLISDQNRSIATLAITTLLKTGNE), and 361–398 (SSVDRLMKQMTNFMSDIADEFKIVVVEAIRSLCLKFPL). The tract at residues 596–617 (PLAEKKTTGKKPTGPASALSGP) is disordered.

The protein belongs to the COPG family. In terms of assembly, oligomeric complex that consists of at least the alpha, beta, beta', gamma, delta, epsilon and zeta subunits.

It is found in the cytoplasm. It localises to the golgi apparatus membrane. Its subcellular location is the cytoplasmic vesicle. The protein resides in the COPI-coated vesicle membrane. Its function is as follows. The coatomer is a cytosolic protein complex that binds to dilysine motifs and reversibly associates with Golgi non-clathrin-coated vesicles, which further mediate biosynthetic protein transport from the ER, via the Golgi up to the trans Golgi network. Coatomer complex is required for budding from Golgi membranes, and is essential for the retrograde Golgi-to-ER transport of dilysine-tagged proteins. In Oryza sativa subsp. japonica (Rice), this protein is Coatomer subunit gamma-2.